A 150-amino-acid polypeptide reads, in one-letter code: Snaclec CTL-Eoc125 (150 aa).

Residues 1 to 23 form the signal peptide; the sequence is MGRFISVSFGLLVVFLSLSGIGA. Disulfide bonds link C27–C38, C55–C144, and C121–C136. The region spanning 34 to 145 is the C-type lectin domain; it reads YEGHCYKVFS…CSSTQQFICK (112 aa).

This sequence belongs to the snaclec family. Heterodimer; disulfide-linked. As to expression, expressed by the venom gland.

It is found in the secreted. Functionally, interferes with one step of hemostasis (modulation of platelet aggregation, or coagulation cascade, for example). The protein is Snaclec CTL-Eoc125 of Echis ocellatus (Ocellated saw-scaled viper).